The sequence spans 178 residues: Nicotinamide-nucleotide adenylyltransferase (178 aa).

The protein belongs to the archaeal NMN adenylyltransferase family.

It is found in the cytoplasm. The catalysed reaction is beta-nicotinamide D-ribonucleotide + ATP + H(+) = diphosphate + NAD(+). The protein operates within cofactor biosynthesis; NAD(+) biosynthesis; NAD(+) from nicotinamide D-ribonucleotide: step 1/1. The polypeptide is Nicotinamide-nucleotide adenylyltransferase (Thermoplasma volcanium (strain ATCC 51530 / DSM 4299 / JCM 9571 / NBRC 15438 / GSS1)).